The following is a 378-amino-acid chain: Valine--tRNA ligase (378 aa).

A coiled-coil region spans residues 307 to 377 (AGFINKEAEL…IQEQYKAIEA (71 aa)).

The protein belongs to the class-I aminoacyl-tRNA synthetase family. ValS type 1 subfamily. Monomer.

It is found in the cytoplasm. The catalysed reaction is tRNA(Val) + L-valine + ATP = L-valyl-tRNA(Val) + AMP + diphosphate. Functionally, catalyzes the attachment of valine to tRNA(Val). As ValRS can inadvertently accommodate and process structurally similar amino acids such as threonine, to avoid such errors, it has a 'posttransfer' editing activity that hydrolyzes mischarged Thr-tRNA(Val) in a tRNA-dependent manner. The chain is Valine--tRNA ligase (valS) from Haemophilus parainfluenzae.